The sequence spans 223 residues: Deoxyribose-phosphate aldolase (223 aa).

Residue Asp-91 is the Proton donor/acceptor of the active site. Residue Lys-153 is the Schiff-base intermediate with acetaldehyde of the active site. Lys-182 functions as the Proton donor/acceptor in the catalytic mechanism.

This sequence belongs to the DeoC/FbaB aldolase family. DeoC type 1 subfamily.

The protein resides in the cytoplasm. The catalysed reaction is 2-deoxy-D-ribose 5-phosphate = D-glyceraldehyde 3-phosphate + acetaldehyde. The protein operates within carbohydrate degradation; 2-deoxy-D-ribose 1-phosphate degradation; D-glyceraldehyde 3-phosphate and acetaldehyde from 2-deoxy-alpha-D-ribose 1-phosphate: step 2/2. Its function is as follows. Catalyzes a reversible aldol reaction between acetaldehyde and D-glyceraldehyde 3-phosphate to generate 2-deoxy-D-ribose 5-phosphate. The sequence is that of Deoxyribose-phosphate aldolase from Streptococcus pyogenes serotype M3 (strain ATCC BAA-595 / MGAS315).